We begin with the raw amino-acid sequence, 1359 residues long: Regulatory-associated protein of TOR 2 (1359 aa).

2 disordered regions span residues 17-64 (SSAA…PQVA) and 782-819 (SDNSATARDGRISTSSPIATNSIMHGSPQSDDSSQHSD). Residues 32-50 (HLVDDHLPVENGPDPRRDV) are compositionally biased toward basic and acidic residues. Residues 782 to 805 (SDNSATARDGRISTSSPIATNSIM) are compositionally biased toward polar residues. Over residues 806–819 (HGSPQSDDSSQHSD) the composition is skewed to low complexity. 7 WD repeats span residues 1041–1080 (RFELGTKASLLLPFSPIVVAADENEQIRVWNYDDALPVNT), 1087–1127 (SDRG…GGQK), 1139–1178 (RSAGRSIVFDWQQQSGYLYASGDMSSILVWDLDKEQVNTI), 1181–1221 (TADS…RLVY), 1228–1269 (PRSE…EPYL), 1273–1312 (AHRGSLTALAVHRHAPVIASGSAKQMIKVFSLEGEQLTII), and 1321–1359 (QRIGSVNCLSFHRYKSLLAAGAGDNALVSIYAEDNYQVR).

The protein belongs to the WD repeat RAPTOR family. The target of rapamycin complex 1 (TORC1) is composed of at least RAPTOR, LST8 and TOR.

Its function is as follows. Component of TORC1 complex, which is an essential cell growth regulator that controls plant development. Acts by recruiting substrates for TOR. Acts by activating transcription, protein synthesis and ribosome biogenesis, and inhibiting mRNA degradation and autophagy. The chain is Regulatory-associated protein of TOR 2 (RAPTOR2) from Oryza sativa subsp. japonica (Rice).